Reading from the N-terminus, the 84-residue chain is Antitoxin VapB30 (84 aa).

Antitoxin component of a type II toxin-antitoxin (TA) system. Upon expression in M.smegmatis neutralizes the effect of cognate toxin VapC30. This Mycobacterium tuberculosis (strain ATCC 25618 / H37Rv) protein is Antitoxin VapB30 (vapB30).